The sequence spans 100 residues: Large ribosomal subunit protein uL23 (100 aa).

Belongs to the universal ribosomal protein uL23 family. As to quaternary structure, part of the 50S ribosomal subunit. Contacts protein L29, and trigger factor when it is bound to the ribosome.

Its function is as follows. One of the early assembly proteins it binds 23S rRNA. One of the proteins that surrounds the polypeptide exit tunnel on the outside of the ribosome. Forms the main docking site for trigger factor binding to the ribosome. This Synechococcus sp. (strain WH7803) protein is Large ribosomal subunit protein uL23.